A 374-amino-acid chain; its full sequence is Pectate lyase 2 (374 aa).

Positions 1–22 are cleaved as a signal peptide; that stretch reads MKYLLPTAATGLLLLAAQPAVA. A disulfide bridge links C93 with C176. Residues D150, D152, E187, and D191 each coordinate Ca(2+). R239 is a catalytic residue. Cysteines 350 and 373 form a disulfide.

The protein belongs to the polysaccharide lyase 1 family. PLADES subfamily. Ca(2+) is required as a cofactor.

It localises to the secreted. It carries out the reaction Eliminative cleavage of (1-&gt;4)-alpha-D-galacturonan to give oligosaccharides with 4-deoxy-alpha-D-galact-4-enuronosyl groups at their non-reducing ends.. It participates in glycan metabolism; pectin degradation; 2-dehydro-3-deoxy-D-gluconate from pectin: step 2/5. Its function is as follows. Involved in maceration and soft-rotting of plant tissue. This Pectobacterium atrosepticum (strain SCRI 1043 / ATCC BAA-672) (Erwinia carotovora subsp. atroseptica) protein is Pectate lyase 2 (pel2).